The chain runs to 59 residues: Potassium channel toxin alpha-KTx 1.14 (59 aa).

The signal sequence occupies residues Met1 to Gly22. At Gln23 the chain carries Pyrrolidone carboxylic acid. 3 cysteine pairs are disulfide-bonded: Cys29/Cys50, Cys35/Cys55, and Cys39/Cys57.

This sequence belongs to the short scorpion toxin superfamily. Potassium channel inhibitor family. Alpha-KTx 01 subfamily. In terms of tissue distribution, expressed by the venom gland.

It is found in the secreted. In terms of biological role, potent blocker of both large-conductance calcium-activated potassium channels (KCa1.1/KCNMA1) and voltage-gated potassium channels (Kv1.3/KCNA3 and ERG1/Kv11.1/KCNH2). This chain is Potassium channel toxin alpha-KTx 1.14, found in Olivierus martensii (Manchurian scorpion).